Reading from the N-terminus, the 249-residue chain is Dihydroneopterin 2',3'-cyclic phosphate phosphodiesterase (249 aa).

The 115-residue stretch at 58 to 172 (LIEHTISVTK…VHYADEADSK (115 aa)) folds into the HD domain.

As to quaternary structure, homododecamer. Fe(2+) serves as cofactor. Requires Zn(2+) as cofactor.

The enzyme catalyses 7,8-dihydroneopterin 2',3'-cyclic phosphate + H2O = 7,8-dihydroneopterin 3'-phosphate + H(+). It catalyses the reaction 7,8-dihydroneopterin 2',3'-cyclic phosphate + H2O = 7,8-dihydroneopterin 2'-phosphate + H(+). The protein operates within cofactor biosynthesis; 5,6,7,8-tetrahydromethanopterin biosynthesis. Functionally, cyclic phosphodiesterase that hydrolyzes the cyclic phosphate of 7,8-dihydroneopterin 2',3'-cyclic phosphate (H2N-cP) and converts it to a mixture of 7,8-dihydroneopterin 2'-phosphate (H2N-2'P) and 7,8-dihydroneopterin 3'-phosphate (H2N-3'P). Is also able to utilize other phosphodiesters as substrates in vitro: hydrolysis of bis-pNPP and pNPPC produces nitrophenyl phosphate, and that of 2',3'-cAMP produces 3'-AMP. ATP, 3',5'-cAMP, GTP, 3',5'-cGMP, and 4',5'-cFMN cannot serve as substrates. In Methanocaldococcus jannaschii (strain ATCC 43067 / DSM 2661 / JAL-1 / JCM 10045 / NBRC 100440) (Methanococcus jannaschii), this protein is Dihydroneopterin 2',3'-cyclic phosphate phosphodiesterase (mptB).